The primary structure comprises 1280 residues: Rho guanine nucleotide exchange factor 10-like protein (1280 aa).

Over residues 1 to 10 the composition is skewed to pro residues; sequence MASSNPPPQP. The segment at 1–94 is disordered; the sequence is MASSNPPPQP…TEAPTVVSNG (94 aa). The span at 26-46 shows a compositional bias: acidic residues; sequence EVEEDSGEAFEFDDSDEEEDT. Ser40 is modified (phosphoserine). A compositionally biased stretch (low complexity) spans 78–89; that stretch reads PAAAPPQTEAPT. Phosphotyrosine occurs at positions 131 and 152. The interval 161-202 is disordered; the sequence is PRETEDLGWSSSEFESYSEDSGEETKPEAEPTKHRGSFQPKL. The span at 183–193 shows a compositional bias: basic and acidic residues; it reads EETKPEAEPTK. Ser279 bears the Phosphoserine mark. Residues 314–501 enclose the DH domain; the sequence is VRRHILGSIV…ETLAEKLNEQ (188 aa). 2 disordered regions span residues 1133–1163 and 1186–1207; these read QEEA…HTAR and PLLS…SEED.

Interacts with RHOA, RHOB and RHOC.

Its subcellular location is the cytoplasm. In terms of biological role, acts as a guanine nucleotide exchange factor (GEF) for RHOA, RHOB and RHOC. The polypeptide is Rho guanine nucleotide exchange factor 10-like protein (Arhgef10l) (Mus musculus (Mouse)).